Consider the following 195-residue polypeptide: Triosephosphate isomerase, cytosolic (195 aa).

His37 serves as the catalytic Electrophile. The active-site Proton acceptor is Glu107.

The protein belongs to the triosephosphate isomerase family. As to quaternary structure, homodimer.

Its subcellular location is the cytoplasm. It carries out the reaction D-glyceraldehyde 3-phosphate = dihydroxyacetone phosphate. It functions in the pathway carbohydrate biosynthesis; gluconeogenesis. Its pathway is carbohydrate degradation; glycolysis; D-glyceraldehyde 3-phosphate from glycerone phosphate: step 1/1. The chain is Triosephosphate isomerase, cytosolic from Lactuca sativa (Garden lettuce).